The primary structure comprises 484 residues: Protein nucleotidyltransferase YdiU (484 aa).

ATP contacts are provided by glycine 87, glycine 89, arginine 90, lysine 110, aspartate 122, glycine 123, arginine 173, and arginine 180. The Proton acceptor role is filled by aspartate 249. 2 residues coordinate Mg(2+): asparagine 250 and aspartate 259. Aspartate 259 lines the ATP pocket.

The protein belongs to the SELO family. Mg(2+) is required as a cofactor. Requires Mn(2+) as cofactor.

It catalyses the reaction L-seryl-[protein] + ATP = 3-O-(5'-adenylyl)-L-seryl-[protein] + diphosphate. The enzyme catalyses L-threonyl-[protein] + ATP = 3-O-(5'-adenylyl)-L-threonyl-[protein] + diphosphate. It carries out the reaction L-tyrosyl-[protein] + ATP = O-(5'-adenylyl)-L-tyrosyl-[protein] + diphosphate. The catalysed reaction is L-histidyl-[protein] + UTP = N(tele)-(5'-uridylyl)-L-histidyl-[protein] + diphosphate. It catalyses the reaction L-seryl-[protein] + UTP = O-(5'-uridylyl)-L-seryl-[protein] + diphosphate. The enzyme catalyses L-tyrosyl-[protein] + UTP = O-(5'-uridylyl)-L-tyrosyl-[protein] + diphosphate. In terms of biological role, nucleotidyltransferase involved in the post-translational modification of proteins. It can catalyze the addition of adenosine monophosphate (AMP) or uridine monophosphate (UMP) to a protein, resulting in modifications known as AMPylation and UMPylation. The chain is Protein nucleotidyltransferase YdiU from Alcanivorax borkumensis (strain ATCC 700651 / DSM 11573 / NCIMB 13689 / SK2).